The chain runs to 397 residues: Argininosuccinate synthase (397 aa).

9-17 (AYSGGLDTS) contacts ATP. Tyr86 lines the L-citrulline pocket. Gly116 is a binding site for ATP. Residues Thr118, Asn122, and Asp123 each coordinate L-aspartate. Asn122 contributes to the L-citrulline binding site. L-citrulline contacts are provided by Arg126, Ser174, Glu259, and Tyr271.

It belongs to the argininosuccinate synthase family. Type 1 subfamily. As to quaternary structure, homotetramer.

It localises to the cytoplasm. It carries out the reaction L-citrulline + L-aspartate + ATP = 2-(N(omega)-L-arginino)succinate + AMP + diphosphate + H(+). The protein operates within amino-acid biosynthesis; L-arginine biosynthesis; L-arginine from L-ornithine and carbamoyl phosphate: step 2/3. This is Argininosuccinate synthase from Lactococcus lactis subsp. cremoris (strain MG1363).